A 237-amino-acid polypeptide reads, in one-letter code: CD209 antigen-like protein D (237 aa).

Residues 1–54 (MSDSMESKTQQVVIPEDEECLMSGTRYSDISSRLQTKFGIKSLAEYTKQSRNPL) are Cytoplasmic-facing. The helical; Signal-anchor for type II membrane protein transmembrane segment at 55–75 (VLQLLSFLFLAGLLLIILILV) threads the bilayer. At 76 to 237 (SKVPSSEVQN…KVSTSSCTTK (162 aa)) the chain is on the extracellular side. Cysteine 106 and cysteine 117 are joined by a disulfide. A C-type lectin domain is found at 112-227 (FFNGSCYFFS…CDKLLFWICK (116 aa)). N-linked (GlcNAc...) asparagine glycans are attached at residues asparagine 114 and asparagine 129. 2 cysteine pairs are disulfide-bonded: cysteine 134-cysteine 226 and cysteine 205-cysteine 218. Ca(2+) is bound by residues glutamate 196, asparagine 198, glutamate 203, asparagine 214, and aspartate 215.

It is found in the membrane. In terms of biological role, probable pathogen-recognition receptor. May mediate the endocytosis of pathogens which are subsequently degraded in lysosomal compartments. May recognize in a calcium-dependent manner high mannose N-linked oligosaccharides in a variety of pathogen antigens. In Mus musculus (Mouse), this protein is CD209 antigen-like protein D (Cd209d).